We begin with the raw amino-acid sequence, 331 residues long: 6-phosphogluconolactonase (331 aa).

Residue Lys-287 is modified to N6-acetyllysine.

The protein belongs to the cycloisomerase 2 family.

The catalysed reaction is 6-phospho-D-glucono-1,5-lactone + H2O = 6-phospho-D-gluconate + H(+). Its pathway is carbohydrate degradation; pentose phosphate pathway; D-ribulose 5-phosphate from D-glucose 6-phosphate (oxidative stage): step 2/3. Catalyzes the hydrolysis of 6-phosphogluconolactone to 6-phosphogluconate. The protein is 6-phosphogluconolactonase of Escherichia coli O157:H7.